The sequence spans 91 residues: uncharacterized protein (91 aa).

The next 2 helical transmembrane spans lie at 5-27 (FFKYSVLLLPALINLAAFLTNFQ) and 47-69 (DFYHLTGNIVVYIVSAFLSFIFF).

The protein resides in the cell membrane. This is an uncharacterized protein from Archaeoglobus fulgidus (strain ATCC 49558 / DSM 4304 / JCM 9628 / NBRC 100126 / VC-16).